A 142-amino-acid chain; its full sequence is Hemoglobin subunit alpha-1 (142 aa).

Positions 2-142 (KLSADDKHNV…VGYVLASKYR (141 aa)) constitute a Globin domain. Residue His-59 coordinates O2. His-88 serves as a coordination point for heme b.

The protein belongs to the globin family. As to quaternary structure, major hemoglobin is a heterotetramer of two alpha-1 chains and two beta-1 chains. Red blood cells.

Its function is as follows. Involved in oxygen transport from the lung to the various peripheral tissues. This chain is Hemoglobin subunit alpha-1, found in Triturus cristatus (Great crested newt).